Reading from the N-terminus, the 172-residue chain is Interferon tau-3 (172 aa).

Intrachain disulfides connect Cys-1–Cys-99 and Cys-29–Cys-139. Asn-78 is a glycosylation site (N-linked (GlcNAc...) asparagine).

The protein belongs to the alpha/beta interferon family. IFN-alphaII subfamily. In terms of tissue distribution, constitutively and exclusively expressed in the mononuclear cells of the extraembryonic trophectoderm.

The protein resides in the secreted. Its function is as follows. Paracrine hormone primarily responsible for maternal recognition of pregnancy. Interacts with endometrial receptors, probably type I interferon receptors, and blocks estrogen receptor expression, preventing the estrogen-induced increase in oxytocin receptor expression in the endometrium. This results in the suppression of the pulsatile endometrial release of the luteolytic hormone prostaglandin F2-alpha, hindering the regression of the corpus luteum (luteolysis) and therefore a return to ovarian cyclicity. This, and a possible direct effect of IFN-tau on prostaglandin synthesis, leads in turn to continued ovarian progesterone secretion, which stimulates the secretion by the endometrium of the nutrients required for the growth of the conceptus. In summary, displays particularly high antiviral and antiproliferative potency concurrently with particular weak cytotoxicity, high antiluteolytic activity and immunomodulatory properties. In contrast with other IFNs, IFN-tau is not virally inducible. This is Interferon tau-3 (IFNT3) from Bos taurus (Bovine).